The sequence spans 170 residues: CDP-archaeol synthase (170 aa).

The next 5 helical transmembrane spans lie at 9–29 (AFWY…LGGG), 53–73 (GFFG…FLLP), 79–99 (LGIA…GDLI), 114–134 (PAVG…AYPV), and 140–160 (GEVL…NIFA).

It belongs to the CDP-archaeol synthase family. Mg(2+) is required as a cofactor.

The protein resides in the cell membrane. The enzyme catalyses 2,3-bis-O-(geranylgeranyl)-sn-glycerol 1-phosphate + CTP + H(+) = CDP-2,3-bis-O-(geranylgeranyl)-sn-glycerol + diphosphate. It participates in membrane lipid metabolism; glycerophospholipid metabolism. Its function is as follows. Catalyzes the formation of CDP-2,3-bis-(O-geranylgeranyl)-sn-glycerol (CDP-archaeol) from 2,3-bis-(O-geranylgeranyl)-sn-glycerol 1-phosphate (DGGGP) and CTP. This reaction is the third ether-bond-formation step in the biosynthesis of archaeal membrane lipids. The polypeptide is CDP-archaeol synthase (Pyrococcus horikoshii (strain ATCC 700860 / DSM 12428 / JCM 9974 / NBRC 100139 / OT-3)).